The following is a 493-amino-acid chain: Galactose-1-phosphate uridylyltransferase (493 aa).

Belongs to the galactose-1-phosphate uridylyltransferase type 2 family.

It is found in the cytoplasm. It carries out the reaction alpha-D-galactose 1-phosphate + UDP-alpha-D-glucose = alpha-D-glucose 1-phosphate + UDP-alpha-D-galactose. It functions in the pathway carbohydrate metabolism; galactose metabolism. The sequence is that of Galactose-1-phosphate uridylyltransferase from Streptococcus pneumoniae serotype 19F (strain G54).